Consider the following 175-residue polypeptide: Translation initiation factor IF-3 (175 aa).

It belongs to the IF-3 family. Monomer.

Its subcellular location is the cytoplasm. In terms of biological role, IF-3 binds to the 30S ribosomal subunit and shifts the equilibrium between 70S ribosomes and their 50S and 30S subunits in favor of the free subunits, thus enhancing the availability of 30S subunits on which protein synthesis initiation begins. The chain is Translation initiation factor IF-3 from Aquifex aeolicus (strain VF5).